The following is a 407-amino-acid chain: Putative two-component response regulator ARR19 (407 aa).

The region spanning 35–150 is the Response regulatory domain; that stretch reads NVLVVDTNFT…VMANIWQHIV (116 aa). Residue D86 is modified to 4-aspartylphosphate. The Nuclear localization signal signature appears at 214–217; the sequence is RKPR. The myb-like GARP DNA-binding region spans 217–271; that stretch reads RMTWTEELHQKFLEAIEIIGGIEKANPKVLVECLQEMRIEGITRSNVASHLQKHR.

This sequence belongs to the ARR family. Type-B subfamily. In terms of assembly, binds the target DNA as a monomer. In terms of processing, two-component system major event consists of a His-to-Asp phosphorelay between a sensor histidine kinase (HK) and a response regulator (RR). In plants, the His-to-Asp phosphorelay involves an additional intermediate named Histidine-containing phosphotransfer protein (HPt). This multistep phosphorelay consists of a His-Asp-His-Asp sequential transfer of a phosphate group between first a His and an Asp of the HK protein, followed by the transfer to a conserved His of the HPt protein and finally the transfer to an Asp in the receiver domain of the RR protein. In terms of tissue distribution, detected in trichomes and siliques.

The protein resides in the nucleus. Functionally, putative transcriptional activator that binds specifically to the DNA sequence 5'-[AG]GATT-3'. Functions as a response regulator involved in His-to-Asp phosphorelay signal transduction system. Phosphorylation of the Asp residue in the receiver domain activates the ability of the protein to promote the transcription of target genes. Could directly activate some type-A response regulators in response to cytokinins. The sequence is that of Putative two-component response regulator ARR19 (ARR19) from Arabidopsis thaliana (Mouse-ear cress).